We begin with the raw amino-acid sequence, 294 residues long: Elongation factor Ts (294 aa).

The involved in Mg(2+) ion dislocation from EF-Tu stretch occupies residues 79–82 (TDFV).

This sequence belongs to the EF-Ts family.

It is found in the cytoplasm. Associates with the EF-Tu.GDP complex and induces the exchange of GDP to GTP. It remains bound to the aminoacyl-tRNA.EF-Tu.GTP complex up to the GTP hydrolysis stage on the ribosome. This Shouchella clausii (strain KSM-K16) (Alkalihalobacillus clausii) protein is Elongation factor Ts.